The sequence spans 274 residues: Eukaryotic translation initiation factor 3 subunit G (274 aa).

The RRM domain maps to 192–270 (TAIRISNLSN…LILNVEWSKP (79 aa)).

Belongs to the eIF-3 subunit G family. In terms of assembly, component of the eukaryotic translation initiation factor 3 (eIF-3) complex.

It localises to the cytoplasm. Its function is as follows. RNA-binding component of the eukaryotic translation initiation factor 3 (eIF-3) complex, which is involved in protein synthesis of a specialized repertoire of mRNAs and, together with other initiation factors, stimulates binding of mRNA and methionyl-tRNAi to the 40S ribosome. The eIF-3 complex specifically targets and initiates translation of a subset of mRNAs involved in cell proliferation. This subunit can bind 18S rRNA. This Bombyx mori (Silk moth) protein is Eukaryotic translation initiation factor 3 subunit G.